Here is a 184-residue protein sequence, read N- to C-terminus: ATP synthase subunit delta (184 aa).

It belongs to the ATPase delta chain family. In terms of assembly, F-type ATPases have 2 components, F(1) - the catalytic core - and F(0) - the membrane proton channel. F(1) has five subunits: alpha(3), beta(3), gamma(1), delta(1), epsilon(1). F(0) has three main subunits: a(1), b(2) and c(10-14). The alpha and beta chains form an alternating ring which encloses part of the gamma chain. F(1) is attached to F(0) by a central stalk formed by the gamma and epsilon chains, while a peripheral stalk is formed by the delta and b chains.

Its subcellular location is the cell inner membrane. In terms of biological role, f(1)F(0) ATP synthase produces ATP from ADP in the presence of a proton or sodium gradient. F-type ATPases consist of two structural domains, F(1) containing the extramembraneous catalytic core and F(0) containing the membrane proton channel, linked together by a central stalk and a peripheral stalk. During catalysis, ATP synthesis in the catalytic domain of F(1) is coupled via a rotary mechanism of the central stalk subunits to proton translocation. This protein is part of the stalk that links CF(0) to CF(1). It either transmits conformational changes from CF(0) to CF(1) or is implicated in proton conduction. The sequence is that of ATP synthase subunit delta from Caulobacter vibrioides (strain NA1000 / CB15N) (Caulobacter crescentus).